The primary structure comprises 997 residues: Malignant fibrous histiocytoma-amplified sequence 1 homolog (997 aa).

LRR repeat units follow at residues 32 to 53 (SLRQ…ADLG), 54 to 76 (DVEV…QSLS), 79 to 100 (NLHV…VYHL), 102 to 123 (RLTE…VGLL), 125 to 146 (KLKK…LGML), 148 to 170 (DLEE…QGLP), 171 to 192 (SLRT…LFHV), 194 to 216 (ALEE…IRSM), 218 to 239 (SLKI…ICEL), 241 to 262 (NLES…FGAL), 264 to 286 (KLKM…LQLV), 287 to 308 (DLEE…ISCM), 310 to 331 (KLVT…IVEL), and 333 to 354 (FLEE…FGKL). The Roc domain maps to 393–626 (QPAVKPRLKL…EKLLSVAEHR (234 aa)). One can recognise a COR domain in the interval 637-861 (PKSWQMLEEL…RFSVQINSHI (225 aa)).

It is found in the cytoplasm. Functionally, probable GTP-binding protein. Functions in innate immunity and more specifically the inflammatory response as a regulator of the Toll-like receptor TLR2 and TLR4 signaling pathways. The sequence is that of Malignant fibrous histiocytoma-amplified sequence 1 homolog (mfhas1) from Xenopus tropicalis (Western clawed frog).